We begin with the raw amino-acid sequence, 338 residues long: Lipoate-protein ligase A (338 aa).

Positions 29–216 (PATQRVLFLW…AFFAHYGERV (188 aa)) constitute a BPL/LPL catalytic domain. Residues Arg71, 76-79 (GAVF), and Lys134 each bind ATP. Lys134 contacts (R)-lipoate.

Belongs to the LplA family. As to quaternary structure, monomer.

Its subcellular location is the cytoplasm. The enzyme catalyses L-lysyl-[lipoyl-carrier protein] + (R)-lipoate + ATP = N(6)-[(R)-lipoyl]-L-lysyl-[lipoyl-carrier protein] + AMP + diphosphate + H(+). It participates in protein modification; protein lipoylation via exogenous pathway; protein N(6)-(lipoyl)lysine from lipoate: step 1/2. Its pathway is protein modification; protein lipoylation via exogenous pathway; protein N(6)-(lipoyl)lysine from lipoate: step 2/2. Its function is as follows. Catalyzes both the ATP-dependent activation of exogenously supplied lipoate to lipoyl-AMP and the transfer of the activated lipoyl onto the lipoyl domains of lipoate-dependent enzymes. This is Lipoate-protein ligase A from Escherichia coli (strain K12 / MC4100 / BW2952).